The following is a 156-amino-acid chain: Cyclic pyranopterin monophosphate synthase (156 aa).

Substrate contacts are provided by residues 75–77 (LCH) and 111–112 (ME). Asp126 is a catalytic residue.

This sequence belongs to the MoaC family. In terms of assembly, homohexamer; trimer of dimers.

The catalysed reaction is (8S)-3',8-cyclo-7,8-dihydroguanosine 5'-triphosphate = cyclic pyranopterin phosphate + diphosphate. It functions in the pathway cofactor biosynthesis; molybdopterin biosynthesis. Functionally, catalyzes the conversion of (8S)-3',8-cyclo-7,8-dihydroguanosine 5'-triphosphate to cyclic pyranopterin monophosphate (cPMP). The sequence is that of Cyclic pyranopterin monophosphate synthase from Corynebacterium glutamicum (strain ATCC 13032 / DSM 20300 / JCM 1318 / BCRC 11384 / CCUG 27702 / LMG 3730 / NBRC 12168 / NCIMB 10025 / NRRL B-2784 / 534).